The following is a 399-amino-acid chain: Phosphoglycerate kinase (399 aa).

Residues 24 to 26 (DLN), Arg41, 64 to 67 (HLGR), Arg123, and Arg160 each bind substrate. ATP is bound by residues Lys210, Gly298, Glu329, and 355–358 (GGDS).

The protein belongs to the phosphoglycerate kinase family. Monomer.

The protein resides in the cytoplasm. It carries out the reaction (2R)-3-phosphoglycerate + ATP = (2R)-3-phospho-glyceroyl phosphate + ADP. Its pathway is carbohydrate degradation; glycolysis; pyruvate from D-glyceraldehyde 3-phosphate: step 2/5. The protein is Phosphoglycerate kinase of Salinispora arenicola (strain CNS-205).